Consider the following 1084-residue polypeptide: Transcription elongation factor SPT5 (1084 aa).

The disordered stretch occupies residues 1–91; it reads MSDSEDSDFS…DDEYEDEDPW (91 aa). Acidic residues-rich tracts occupy residues 20–32, 41–62, and 77–91; these read AEEV…EEEQ, AEEE…EEDD, and DEAD…EDPW. Residues 175–269 are interaction with SUPT4H1; the sequence is DPNLWTVKCK…TDVLKVVKEV (95 aa). 4 KOW domains span residues 272–305, 419–450, 471–502, and 593–626; these read LKPK…ISLK, LQAG…ITIM, FRMG…VILF, and IHVK…LHCK. The interval 312–419 is interaction with RNA polymerase II; the sequence is LDRIKARMSM…TTGKEREHNL (108 aa). A Phosphoserine modification is found at S665. A disordered region spans residues 667-700; it reads RISSPMHPGGGGQPQRGGGGGGGGGMGRGRGRRD. The segment covering 674–694 has biased composition (gly residues); sequence PGGGGQPQRGGGGGGGGGMGR. The KOW 5 domain maps to 702 to 735; the sequence is DLIGQTVRISQGPYKGYIGVVKDATESTARVELH. A disordered region spans residues 748-973; it reads LTTVGGKERQ…HTPGSNIDQA (226 aa). Residues 758-763 form a CTR1-1; approximate repeat; it reads GRSSTH. The interval 758-815 is 8 X 7 AA approximate tandem repeats of G-S-[QR]-T-P-X-[YQ], motif CTR1; the sequence is GRSSTHLRTPMYGSQTPIYGTGSRTPMYGSQTPLHDGSRTPHYGSQTPLHDGSRTPGQ. A compositionally biased stretch (polar residues) spans 759-790; sequence RSSTHLRTPMYGSQTPIYGTGSRTPMYGSQTP. A CTR1-2; approximate repeat occupies 764-769; that stretch reads LRTPMY. The CTR1-3 repeat unit spans residues 770 to 776; that stretch reads GSQTPIY. Phosphothreonine; by CDK9 occurs at positions 773 and 782. Residues 779–785 form a CTR1-4 repeat; it reads GSRTPMY. Residues 786–792 form a CTR1-5 repeat; that stretch reads GSQTPLH. The CTR1-6 repeat unit spans residues 794–800; the sequence is GSRTPHY. The stretch at 801–807 is one CTR1-7 repeat; sequence GSQTPLH. Residues 809 to 815 form a CTR1-8 repeat; sequence GSRTPGQ. Over residues 832–842 the composition is skewed to acidic residues; sequence DEYEFAYDDEP. A CTR2-1 repeat occupies 842-849; the sequence is PSPSPQGY. The interval 842 to 948 is 10 X 8 AA approximate tandem repeats of P-[TS]-P-S-P-[QA]-[SG]-Y, motif CTR2; sequence PSPSPQGYGG…ASPSPSPVGY (107 aa). Residues 852–860 form a CTR2-2; approximate repeat; that stretch reads TPNPQTPGY. A compositionally biased stretch (pro residues) spans 855–864; it reads PQTPGYPEVP. One copy of the CTR2-3; approximate repeat lies at 861–867; sequence PEVPSPQ. Over residues 866-888 the composition is skewed to polar residues; sequence PQVNPQYNPQTPGTPAMYNTDQY. The stretch at 879–883 is one CTR2-4; half-length repeat; the sequence is TPAMY. A CTR2-5; approximate repeat occupies 894 to 900; that stretch reads PSPQGSY. Low complexity predominate over residues 894 to 909; that stretch reads PSPQGSYQPSPSPQSY. Residues 902-909 form a CTR2-6 repeat; sequence PSPSPQSY. The stretch at 914-919 is one CTR2-7; approximate repeat; it reads PSPVGY. Residues 922–928 form a CTR2-8 repeat; the sequence is THSPASY. One copy of the CTR2-9 repeat lies at 930–937; it reads PTPSPMAY. The stretch at 941 to 948 is one CTR2-10 repeat; that stretch reads PSPSPVGY.

This sequence belongs to the SPT5 family. Interacts with SUPT4H1 to form the DSIF complex. DSIF interacts with RNA polymerase II and with the positive transcription elongation factor b complex (P-TEFb complex), which is composed of CDK9 and cyclin-T. Post-translationally, phosphorylated. Phosphorylation by P-TEFb (CDK9) at Thr residues of the C-terminal repeats alleviates transcriptional pausing and promotes transcription elongation.

The protein localises to the nucleus. In terms of biological role, component of the DRB sensitivity-inducing factor complex (DSIF complex), which regulates mRNA processing and transcription elongation by RNA polymerase II. DSIF positively regulates mRNA capping by stimulating the mRNA guanylyltransferase activity of RNGTT/CAP1A. DSIF also acts cooperatively with the negative elongation factor complex (NELF complex) to enhance transcriptional pausing at sites proximal to the promoter. Transcriptional pausing may facilitate the assembly of an elongation competent RNA polymerase II complex. DSIF and NELF promote pausing by inhibition of the transcription elongation factor TFIIS/S-II. TFIIS/S-II binds to RNA polymerase II at transcription pause sites and stimulates the weak intrinsic nuclease activity of the enzyme. Cleavage of blocked transcripts by RNA polymerase II promotes the resumption of transcription from the new 3' terminus and may allow repeated attempts at transcription through natural pause sites. Following phosphorylation by CDK9, DSIF can also positively regulate transcriptional elongation. Regulation of transcriptional elongation by this protein is required for the expression of genes which control neuronal development. The polypeptide is Transcription elongation factor SPT5 (supt5h) (Danio rerio (Zebrafish)).